A 236-amino-acid chain; its full sequence is Ribosomal RNA large subunit methyltransferase E (236 aa).

S-adenosyl-L-methionine is bound by residues Gly-76, Trp-78, Asp-99, Asp-115, and Asp-140. Lys-180 (proton acceptor) is an active-site residue.

The protein belongs to the class I-like SAM-binding methyltransferase superfamily. RNA methyltransferase RlmE family.

The protein localises to the cytoplasm. It catalyses the reaction uridine(2552) in 23S rRNA + S-adenosyl-L-methionine = 2'-O-methyluridine(2552) in 23S rRNA + S-adenosyl-L-homocysteine + H(+). Functionally, specifically methylates the uridine in position 2552 of 23S rRNA at the 2'-O position of the ribose in the fully assembled 50S ribosomal subunit. In Rhodopseudomonas palustris (strain HaA2), this protein is Ribosomal RNA large subunit methyltransferase E.